A 304-amino-acid polypeptide reads, in one-letter code: MSWIERILNKSNITQTRKAGIPEGVWTKCDSCGQVLYRAELERNLEVCPKCDHHMRMSARARLHMLLDAGSEVELGSELEPKDILKFRDSKKYKDRISAAQKDTGEKDALVAMKGTLQGMPIVAASFEFAFMGGSMASVVGARFVRAVEQALEDNCPLVCFSSSGGARMQEALMSLMQMAKTSAALAKMQERGLPYISVLTDPTMGGVSASLAMLGDINIAEPKALIGFAGPRVIEQTVREKLPPGFQRSEFLIEKGAIDMIVRRPVMRQTLASILSKLTHQPQPSVVESKADTVAQPENQADV.

Residues 25–294 (VWTKCDSCGQ…PSVVESKADT (270 aa)) enclose the CoA carboxyltransferase N-terminal domain. Zn(2+) contacts are provided by Cys29, Cys32, Cys48, and Cys51. A C4-type zinc finger spans residues 29–51 (CDSCGQVLYRAELERNLEVCPKC).

Belongs to the AccD/PCCB family. As to quaternary structure, acetyl-CoA carboxylase is a heterohexamer composed of biotin carboxyl carrier protein (AccB), biotin carboxylase (AccC) and two subunits each of ACCase subunit alpha (AccA) and ACCase subunit beta (AccD). Zn(2+) serves as cofactor.

It is found in the cytoplasm. It carries out the reaction N(6)-carboxybiotinyl-L-lysyl-[protein] + acetyl-CoA = N(6)-biotinyl-L-lysyl-[protein] + malonyl-CoA. Its pathway is lipid metabolism; malonyl-CoA biosynthesis; malonyl-CoA from acetyl-CoA: step 1/1. In terms of biological role, component of the acetyl coenzyme A carboxylase (ACC) complex. Biotin carboxylase (BC) catalyzes the carboxylation of biotin on its carrier protein (BCCP) and then the CO(2) group is transferred by the transcarboxylase to acetyl-CoA to form malonyl-CoA. In Yersinia pestis (strain Pestoides F), this protein is Acetyl-coenzyme A carboxylase carboxyl transferase subunit beta.